An 87-amino-acid chain; its full sequence is Small ribosomal subunit protein bS20 (87 aa).

A disordered region spans residues 1-27; the sequence is MANIKSAKKRAIQSEKRRQHNASRRSM.

This sequence belongs to the bacterial ribosomal protein bS20 family.

Functionally, binds directly to 16S ribosomal RNA. This chain is Small ribosomal subunit protein bS20, found in Aeromonas salmonicida (strain A449).